Here is a 212-residue protein sequence, read N- to C-terminus: ATP phosphoribosyltransferase (212 aa).

This sequence belongs to the ATP phosphoribosyltransferase family. Short subfamily. As to quaternary structure, heteromultimer composed of HisG and HisZ subunits.

It is found in the cytoplasm. It carries out the reaction 1-(5-phospho-beta-D-ribosyl)-ATP + diphosphate = 5-phospho-alpha-D-ribose 1-diphosphate + ATP. It participates in amino-acid biosynthesis; L-histidine biosynthesis; L-histidine from 5-phospho-alpha-D-ribose 1-diphosphate: step 1/9. Functionally, catalyzes the condensation of ATP and 5-phosphoribose 1-diphosphate to form N'-(5'-phosphoribosyl)-ATP (PR-ATP). Has a crucial role in the pathway because the rate of histidine biosynthesis seems to be controlled primarily by regulation of HisG enzymatic activity. The chain is ATP phosphoribosyltransferase from Prochlorococcus marinus (strain MIT 9312).